A 433-amino-acid chain; its full sequence is 3-phosphoshikimate 1-carboxyvinyltransferase (433 aa).

3-phosphoshikimate-binding residues include lysine 22, serine 23, and arginine 27. Residue lysine 22 participates in phosphoenolpyruvate binding. Glycine 94 and arginine 123 together coordinate phosphoenolpyruvate. Serine 168, glutamine 170, aspartate 319, and lysine 346 together coordinate 3-phosphoshikimate. Glutamine 170 serves as a coordination point for phosphoenolpyruvate. The active-site Proton acceptor is aspartate 319. Phosphoenolpyruvate contacts are provided by arginine 350 and arginine 392.

Belongs to the EPSP synthase family. As to quaternary structure, monomer.

Its subcellular location is the cytoplasm. The catalysed reaction is 3-phosphoshikimate + phosphoenolpyruvate = 5-O-(1-carboxyvinyl)-3-phosphoshikimate + phosphate. The protein operates within metabolic intermediate biosynthesis; chorismate biosynthesis; chorismate from D-erythrose 4-phosphate and phosphoenolpyruvate: step 6/7. Catalyzes the transfer of the enolpyruvyl moiety of phosphoenolpyruvate (PEP) to the 5-hydroxyl of shikimate-3-phosphate (S3P) to produce enolpyruvyl shikimate-3-phosphate and inorganic phosphate. This Roseiflexus sp. (strain RS-1) protein is 3-phosphoshikimate 1-carboxyvinyltransferase.